Here is a 495-residue protein sequence, read N- to C-terminus: Probable plastidic glucose transporter 3 (495 aa).

12 helical membrane passes run 55–75 (LPHVLVASLTSLLFGYHLGVV), 97–117 (LVVSTCLGGAFIGSLFSGLVA), 131–151 (LPMIVGASVSASTESLMGMLL), 154–174 (FLVGIGMGIGPSVTALYVTEV), 183–203 (YGSSTQIATCIGLLGSLFAGI), 214–234 (ICFWISTVPAAMLAVFMELCV), 294–314 (VVFIGSTLFALQQLSGINAVF), 330–350 (SANICVGVCNLLGSTVAVVLM), 357–377 (VLLIGSFAGMAVSLGLQAIAY), 384–404 (FGTLFLSVGGMLLFVLSFATG), 425–445 (ALAVCLAVHWVINFFVGLLFL), and 451–471 (LGSVLLNAIFGFFCVVAVIFV).

The protein belongs to the major facilitator superfamily. Sugar transporter (TC 2.A.1.1) family.

The protein localises to the plastid. Its subcellular location is the chloroplast membrane. In terms of biological role, may be involved in the efflux of glucose towards the cytosol. The polypeptide is Probable plastidic glucose transporter 3 (Arabidopsis thaliana (Mouse-ear cress)).